A 385-amino-acid polypeptide reads, in one-letter code: Protein pelota homolog (385 aa).

Lys-162 is covalently cross-linked (Glycyl lysine isopeptide (Lys-Gly) (interchain with G-Cter in SUMO2)). Ser-374, Ser-380, Ser-381, and Ser-382 each carry phosphoserine.

The protein belongs to the eukaryotic release factor 1 family. Pelota subfamily. As to quaternary structure, component of the Pelota-HBS1L complex, also named Dom34-Hbs1 complex, composed of PELO and HBS1L. Interacts with PINK1. Interacts with ABCE1. Interacts with CNOT4. It depends on a divalent metal cation as a cofactor.

The protein resides in the cytoplasm. In terms of biological role, component of the Pelota-HBS1L complex, a complex that recognizes stalled ribosomes and triggers the No-Go Decay (NGD) pathway. In the Pelota-HBS1L complex, PELO recognizes ribosomes stalled at the 3' end of an mRNA and engages stalled ribosomes by destabilizing mRNA in the mRNA channel. Following mRNA extraction from stalled ribosomes by the SKI complex, the Pelota-HBS1L complex promotes recruitment of ABCE1, which drives the disassembly of stalled ribosomes, followed by degradation of damaged mRNAs as part of the NGD pathway. As part of the PINK1-regulated signaling, upon mitochondrial damage is recruited to the ribosome/mRNA-ribonucleoprotein complex associated to mitochondrial outer membrane thereby enabling the recruitment of autophagy receptors and induction of mitophagy. This chain is Protein pelota homolog (PELO), found in Bos taurus (Bovine).